The following is a 285-amino-acid chain: GTP-binding protein 8 (285 aa).

The EngB-type G domain maps to 110-283 (RQPEVCFIGR…KCFIADITGS (174 aa)). Residues 118–125 (GRSNVGKS), 147–151 (GHTKK), 165–168 (DMPG), 227–230 (TKID), and 262–264 (ISA) contribute to the GTP site. Mg(2+) is bound by residues Ser125 and Thr149.

It belongs to the TRAFAC class TrmE-Era-EngA-EngB-Septin-like GTPase superfamily. EngB GTPase family. It depends on Mg(2+) as a cofactor.

The sequence is that of GTP-binding protein 8 (Gtpbp8) from Rattus norvegicus (Rat).